Here is a 197-residue protein sequence, read N- to C-terminus: Nucleoid occlusion factor SlmA (197 aa).

In terms of domain architecture, HTH tetR-type spans 7–67 (INRREHILQC…GLIEFIEESL (61 aa)). The segment at residues 30–49 (TTAKLASEVGVSEAALYRHF) is a DNA-binding region (H-T-H motif). A coiled-coil region spans residues 110 to 130 (ALLGENERLRSRISSLFAKIE).

The protein belongs to the nucleoid occlusion factor SlmA family. As to quaternary structure, homodimer. Interacts with FtsZ.

The protein resides in the cytoplasm. It localises to the nucleoid. Its function is as follows. Required for nucleoid occlusion (NO) phenomenon, which prevents Z-ring formation and cell division over the nucleoid. Acts as a DNA-associated cell division inhibitor that binds simultaneously chromosomal DNA and FtsZ, and disrupts the assembly of FtsZ polymers. SlmA-DNA-binding sequences (SBS) are dispersed on non-Ter regions of the chromosome, preventing FtsZ polymerization at these regions. The polypeptide is Nucleoid occlusion factor SlmA (Shewanella sp. (strain W3-18-1)).